The following is a 303-amino-acid chain: Siderophore enterobactin esterase (303 aa).

This sequence belongs to the esterase D family. Homodimer.

The enzyme catalyses enterobactin + 3 H2O = 3 N-(2,3-dihydroxybenzoyl)-L-serine + 2 H(+). Functionally, displays specific enterobactin (ENB) esterase activity required for intracellular release of iron. Enterobactin is a xenosiderophore that is selectively produced by Gram-negative Enterobacteriaceae. The affinity for enterobactin is quite high, potentially due to the low natural abundance of this xenosiderophore in fungal habitats. Does not hydrolyze triacetylfusarinine C (TAFC). The sequence is that of Siderophore enterobactin esterase from Emericella nidulans (strain FGSC A4 / ATCC 38163 / CBS 112.46 / NRRL 194 / M139) (Aspergillus nidulans).